The chain runs to 337 residues: Junctional sarcoplasmic reticulum protein 1 (337 aa).

The tract at residues 1–84 (MATRAMEELD…EKEPVSKVTS (84 aa)) is mediates interaction with CACNA1S. 2 disordered regions span residues 23-125 (SALA…ELPW) and 159-337 (EAPA…KGRD). 2 stretches are compositionally biased toward basic and acidic residues: residues 49-59 (SRSHDSQERVT) and 69-79 (TKPKKMEKEPV). Low complexity predominate over residues 165–180 (PESWASSSSSPKGPAS). A compositionally biased stretch (basic and acidic residues) spans 199–213 (SKLEERVQIPRSEEA). Positions 214 to 225 (AEKDEWESEEAA) are enriched in acidic residues. 3 stretches are compositionally biased toward basic and acidic residues: residues 236 to 277 (GPKE…RGAR), 285 to 309 (RRWEAREGGHRPWGRDSGAPEDRKR), and 316 to 325 (RRPDEEDRPL). Basic residues predominate over residues 326–337 (GRQKRRAGKGRD).

As to quaternary structure, interacts with CACNA1S, CACNB1 and calsequestrin.

The protein localises to the sarcoplasmic reticulum membrane. The protein resides in the endoplasmic reticulum membrane. Functionally, involved in skeletal muscle excitation/contraction coupling (EC), probably acting as a regulator of the voltage-sensitive calcium channel CACNA1S. EC is a physiological process whereby an electrical signal (depolarization of the plasma membrane) is converted into a chemical signal, a calcium gradient, by the opening of ryanodine receptor calcium release channels. May regulate CACNA1S membrane targeting and activity. This Bos taurus (Bovine) protein is Junctional sarcoplasmic reticulum protein 1 (JSRP1).